A 425-amino-acid polypeptide reads, in one-letter code: MADKEAAFDDAVEERVINEEYKIWKKNTPFLYDLVMTHALEWPSLTAQWLPDVTRPEGKDFSIHRLVLGTHTSDEQNHLVIASVQLPNDDAQFDASHYDSEKGEFGGFGSVSGKIEIEIKINHEGEVNRARYMPQNPCIIATKTPSSDVLVFDYTKHPSKPDPSGECNPDLRLRGHQKEGYGLSWNPNLSGHLLSASDDHTICLWDISAVPKEGKVVDAKTIFTGHTAVVEDVSWHLLHESLFGSVADDQKLMIWDTRSNNTSKPSHSVDAHTAEVNCLSFNPYSEFILATGSADKTVALWDLRNLKLKLHSFESHKDEIFQVQWSPHNETILASSGTDRRLNVWDLSKIGEEQSPEDAEDGPPELLFIHGGHTAKISDFSWNPNEPWVICSVSEDNIMQVWQMAENIYNDEDPEGSVDPEGQGS.

An N-acetylalanine modification is found at Ala-2. An N6-acetyllysine; alternate modification is found at Lys-4. A Glycyl lysine isopeptide (Lys-Gly) (interchain with G-Cter in SUMO2); alternate cross-link involves residue Lys-4. Lys-4 is covalently cross-linked (Glycyl lysine isopeptide (Lys-Gly) (interchain with G-Cter in ubiquitin); alternate). WD repeat units follow at residues 32–125 (YDLV…NHEG), 126–175 (EVNR…RLRG), 176–223 (HQKE…KTIF), 225–270 (GHTA…HSVD), 271–314 (AHTA…HSFE), 315–371 (SHKD…FIHG), and 372–404 (GHTAKISDFSWNPNEPWVICSVSEDNIMQVWQM). Residue Ser-110 is modified to Phosphoserine. Lys-160 bears the N6-acetyllysine; alternate mark. Lys-160 participates in a covalent cross-link: Glycyl lysine isopeptide (Lys-Gly) (interchain with G-Cter in SUMO2); alternate. Position 355 is a phosphoserine (Ser-355).

The protein belongs to the WD repeat RBAP46/RBAP48/MSI1 family. In terms of assembly, binds directly to helix 1 of the histone fold of histone H4, a region that is not accessible when H4 is in chromatin. Subunit of the chromatin assembly factor 1 (CAF-1) complex, which is composed of RBBP4, CHAF1B and CHAF1A. Subunit of the core histone deacetylase (HDAC) complex, which is composed of HDAC1, HDAC2, RBBP4 and RBBP7. The core HDAC complex associates with SIN3A, ARID4B/SAP180, SAP18, SAP30, SAP130, SUDS3/SAP45 and possibly ARID4A/RBP1 and ING1 to form the SIN3 HDAC complex. Component of the nucleosome remodeling and deacetylase (NuRD) repressor complex, composed of core proteins MTA1, MTA2, MTA3, RBBP4, RBBP7, HDAC1, HDAC2, MBD2, MBD3, and peripherally associated proteins CDK2AP1, CDK2AP2, GATAD2A, GATAD2B, CHD3, CHD4 and CHD5. The exact stoichiometry of the NuRD complex is unknown, and some subunits such as MBD2 and MBD3, GATAD2A and GATAD2B, and CHD3, CHD4 and CHD5 define mutually exclusive NuRD complexes. Interacts with ZNF512B; the interaction is direct and may play a role in repressing gene expression. The NuRD complex may also interact with MBD3L1 and MBD3L2. Component of the PRC2 complex, which consists of the core subunits EED, EZH1 or EZH2, SUZ12, and RBBP4, and various combinations of accessory subunits including AEBP2, JARID2, PHF19, MTF2 and EPOP. Forms a monomeric PRC2.2 (class 2) complex consisting of at least SUZ12, RBBP4, AEBP2 and JARID2. Forms a dimeric PRC2.1 (class 1, PRC-PCL) complex consisting of at least SUZ12, RBBP4, and PHF19; PHF19 stabilizes the dimeric structure which enhances PRC2 interaction with chromatin. Component of the NURF-1 ISWI chromatin remodeling complex (also called the nucleosome-remodeling factor (NURF) complex) at least composed of SMARCA1 (isoform 2), BPTF, RBBP4 and RBBP7. Within the complex interacts with isoform 2 of SMARCA1. Component of the BPFT-SMARCA1 complex at least composed of SMARCA1 (isoform 1), BPFT, RBBP4 and RBBP7; the complex is catalytically inactive and does not remodel chromatin. Within the complex interacts with isoform 1 of SMARCA1. Interacts with the ISWI chromatin remodeling complex component SMARCA5; the interaction is direct. Interacts with the viral protein-binding domain of the retinoblastoma protein (RB1). Component of the DREAM complex (also named LINC complex) at least composed of E2F4, E2F5, LIN9, LIN37, LIN52, LIN54, MYBL1, MYBL2, RBL1, RBL2, RBBP4, TFDP1 and TFDP2. The complex exists in quiescent cells where it represses cell cycle-dependent genes. It dissociates in S phase when LIN9, LIN37, LIN52 and LIN54 form a subcomplex that binds to MYBL2. Found in a complex composed of at least SINHCAF, SIN3A, HDAC1, SAP30, RBBP4, OGT and TET1. Interacts with ZNF827; the interaction is direct and recruits RBBP4 to telomeres. Interacts with MTA1; the interaction is direct and mutually exclusive with binding histone H4. Interacts with ARMC12 (via ARM domains). Interacts with BRCA1. Interacts with CDK2AP1. Interacts with CREBBP, and this interaction may be enhanced by the binding of phosphorylated CREB1 to CREBBP. Interacts with ERCC6. Interacts with HDAC7. Interacts with PHF6. Interacts with PWWP2B. Interacts with SPEN/MINT. Interacts with SUV39H1.

Its subcellular location is the nucleus. The protein resides in the chromosome. It is found in the telomere. Its function is as follows. Core histone-binding subunit that may target chromatin assembly factors, chromatin remodeling factors and histone deacetylases to their histone substrates in a manner that is regulated by nucleosomal DNA. Component of the chromatin assembly factor 1 (CAF-1) complex, which is required for chromatin assembly following DNA replication and DNA repair. Component of the core histone deacetylase (HDAC) complex, which promotes histone deacetylation and consequent transcriptional repression. Component of the nucleosome remodeling and histone deacetylase complex (the NuRD complex), which promotes transcriptional repression by histone deacetylation and nucleosome remodeling. Component of the PRC2 complex, which promotes repression of homeotic genes during development. Component of the NURF (nucleosome remodeling factor) complex. The chain is Histone-binding protein RBBP4 (RBBP4) from Bos taurus (Bovine).